The following is a 93-amino-acid chain: Phosphoribosyl-ATP pyrophosphatase (93 aa).

It belongs to the PRA-PH family.

It is found in the cytoplasm. The catalysed reaction is 1-(5-phospho-beta-D-ribosyl)-ATP + H2O = 1-(5-phospho-beta-D-ribosyl)-5'-AMP + diphosphate + H(+). It functions in the pathway amino-acid biosynthesis; L-histidine biosynthesis; L-histidine from 5-phospho-alpha-D-ribose 1-diphosphate: step 2/9. This is Phosphoribosyl-ATP pyrophosphatase from Mycobacterium leprae (strain Br4923).